The following is a 999-amino-acid chain: Hypoxia up-regulated protein 1 (999 aa).

The N-terminal stretch at 1–32 (MAATVRRQRPRRLLCWALVAVLLADLLALSDT) is a signal peptide. Asn-155, Asn-222, and Asn-515 each carry an N-linked (GlcNAc...) asparagine glycan. The tract at residues 564–694 (VEDSPEEEST…KKQKPARKQK (131 aa)) is disordered. A Phosphoserine modification is found at Ser-567. Residues 574–583 (LTKLGNTISS) show a composition bias toward polar residues. The N-linked (GlcNAc...) asparagine glycan is linked to Asn-596. 2 stretches are compositionally biased toward basic and acidic residues: residues 611–626 (GSKD…KEEA) and 641–668 (PKGD…KPNE). 3 N-linked (GlcNAc...) asparagine glycosylation sites follow: Asn-830, Asn-862, and Asn-869. Lys-883 carries the N6-acetyllysine modification. The disordered stretch occupies residues 909–999 (AKFTKPRPRP…QKRPLKNDEL (91 aa)). N-linked (GlcNAc...) asparagine glycans are attached at residues Asn-922 and Asn-931. Positions 949 to 962 (EEAKAILEPDKEGL) are enriched in basic and acidic residues. Residues 996–999 (NDEL) carry the Prevents secretion from ER motif.

This sequence belongs to the heat shock protein 70 family. In terms of assembly, part of a large chaperone multiprotein complex comprising DNAJB11, HSP90B1, HSPA5, HYOU, PDIA2, PDIA4, PDIA6, PPIB, SDF2L1, UGGT1 and very small amounts of ERP29, but not, or at very low levels, CALR nor CANX. Selectively expressed by cultured astrocytes but not endothelial cells, microglia or neurons.

The protein localises to the endoplasmic reticulum lumen. In terms of biological role, has a pivotal role in cytoprotective cellular mechanisms triggered by oxygen deprivation. Promotes HSPA5/BiP-mediated ATP nucleotide exchange and thereby activates the unfolded protein response (UPR) pathway in the presence of endoplasmic reticulum stress. May play a role as a molecular chaperone and participate in protein folding. The sequence is that of Hypoxia up-regulated protein 1 (Hyou1) from Rattus norvegicus (Rat).